The chain runs to 727 residues: Glucans biosynthesis glucosyltransferase H (727 aa).

Residues 18 to 38 (SAMPNERPGAMEPQNLSKMPE) form a disordered region. Helical transmembrane passes span 58–78 (FLVV…MGAV), 97–117 (VNFC…LILL), 278–298 (LQQF…GWWV), 408–428 (IMAY…LMLA), 460–480 (LFYI…LLLL), 496–516 (IFSV…MMFI), and 572–592 (LLAW…ISAW).

Belongs to the glycosyltransferase 2 family. OpgH subfamily.

The protein resides in the cell inner membrane. It participates in glycan metabolism; osmoregulated periplasmic glucan (OPG) biosynthesis. Involved in the biosynthesis of osmoregulated periplasmic glucans (OPGs). In Shewanella baltica (strain OS185), this protein is Glucans biosynthesis glucosyltransferase H.